The primary structure comprises 81 residues: Photosystem I iron-sulfur center (81 aa).

2 4Fe-4S ferredoxin-type domains span residues 1–31 (MSHKVKIYDTCIGCTQCVRACPLDVLEMVPW) and 39–68 (IASSPRTEDCVGCKRCETACPTDFLSIRVY). [4Fe-4S] cluster-binding residues include Cys11, Cys14, Cys17, Cys21, Cys48, Cys51, Cys54, and Cys58.

The cyanobacterial PSI reaction center is composed of one copy each of PsaA,B,C,D,E,F,I,J,K,L,M and X, and forms trimeric complexes. It depends on [4Fe-4S] cluster as a cofactor.

It localises to the cellular thylakoid membrane. It catalyses the reaction reduced [plastocyanin] + hnu + oxidized [2Fe-2S]-[ferredoxin] = oxidized [plastocyanin] + reduced [2Fe-2S]-[ferredoxin]. Its function is as follows. Apoprotein for the two 4Fe-4S centers FA and FB of photosystem I (PSI); essential for photochemical activity. FB is the terminal electron acceptor of PSI, donating electrons to ferredoxin. The C-terminus interacts with PsaA/B/D and helps assemble the protein into the PSI complex. Required for binding of PsaD and PsaE to PSI. PSI is a plastocyanin/cytochrome c6-ferredoxin oxidoreductase, converting photonic excitation into a charge separation, which transfers an electron from the donor P700 chlorophyll pair to the spectroscopically characterized acceptors A0, A1, FX, FA and FB in turn. The chain is Photosystem I iron-sulfur center from Crocosphaera subtropica (strain ATCC 51142 / BH68) (Cyanothece sp. (strain ATCC 51142)).